A 452-amino-acid chain; its full sequence is MERRIFGLENEYGVTCTFRGQRRLSPDEVARYLFRRVVSWGRSSNVFLRNGARLYLDVGSHPEYATPECDNLLDLVAHDKAGERILEGLQIDAEQRLREEGIAGDIYLFKNNTDSAGNSYGCHENYLVARHGEFGKLADVLIPFLVTRQIICGAGKVLQTPRGALYCVSQRAEHIWEGVSSATTRSRPIINTRDEPHADAERFRRLHVIVGDSNMSETTTLLKLASTDLVLRMIEANVPMRDFTLENPIRAIREISHDMTGRRKVRLANGREASALEIQREYLERVQSFVDRTGTDATGKRVLELWQRTLEAVESGNLDLVAREIDWVAKYKLLERYRAKHGLSLSSPRVAQLDLTYHDIHRDRGLFYLLQQRGQMERVVSDLRIFEAKSVPPQTTRARLRGEFIKKAQEKRRDFTVDWVHLKLNDQAQRTVLCKDPFKAVDERVEKLIAGM.

Glu9 serves as a coordination point for Mg(2+). Position 53 (Arg53) interacts with ATP. Tyr55 lines the Mg(2+) pocket. Asp57 serves as the catalytic Proton acceptor. Residue Glu63 participates in Mg(2+) binding. 2 residues coordinate ATP: Thr66 and Trp419.

The protein belongs to the Pup ligase/Pup deamidase family. Pup-conjugating enzyme subfamily.

It catalyses the reaction ATP + [prokaryotic ubiquitin-like protein]-L-glutamate + [protein]-L-lysine = ADP + phosphate + N(6)-([prokaryotic ubiquitin-like protein]-gamma-L-glutamyl)-[protein]-L-lysine.. It participates in protein degradation; proteasomal Pup-dependent pathway. Its pathway is protein modification; protein pupylation. Functionally, catalyzes the covalent attachment of the prokaryotic ubiquitin-like protein modifier Pup to the proteasomal substrate proteins, thereby targeting them for proteasomal degradation. This tagging system is termed pupylation. The ligation reaction involves the side-chain carboxylate of the C-terminal glutamate of Pup and the side-chain amino group of a substrate lysine. The protein is Pup--protein ligase of Thermobifida fusca (strain YX).